Here is a 157-residue protein sequence, read N- to C-terminus: dCTP deaminase (157 aa).

DCTP-binding positions include 79 to 84, aspartate 95, glutamine 124, and tyrosine 138; that span reads RSSLAR.

The protein belongs to the dCTP deaminase family. Homotrimer.

The enzyme catalyses dCTP + H2O + H(+) = dUTP + NH4(+). It functions in the pathway pyrimidine metabolism; dUMP biosynthesis; dUMP from dCTP (dUTP route): step 1/2. Catalyzes the deamination of dCTP to dUTP. The sequence is that of dCTP deaminase from Thermococcus gammatolerans (strain DSM 15229 / JCM 11827 / EJ3).